Reading from the N-terminus, the 160-residue chain is Iron-sulfur assembly protein IscA1 (160 aa).

This sequence belongs to the HesB/IscA family. As to quaternary structure, tetramer.

It localises to the mitochondrion. It participates in cofactor biosynthesis; iron-sulfur cluster biosynthesis. Its function is as follows. Participates in iron-sulfur cluster formation (ISC) pathway for iron-sulfur (Fe-S) cluster biogenesis. Can bind iron and [4Fe-4S] clusters. May function as an iron chaperone. This is Iron-sulfur assembly protein IscA1 from Plasmodium falciparum (isolate 3D7).